Here is a 395-residue protein sequence, read N- to C-terminus: Ketoisovalerate oxidoreductase subunit VorA (395 aa).

As to quaternary structure, heterotetramer of one alpha, one beta, one delta and one gamma chain.

It catalyses the reaction 3-methyl-2-oxobutanoate + 2 oxidized [2Fe-2S]-[ferredoxin] + CoA = 2-methylpropanoyl-CoA + 2 reduced [2Fe-2S]-[ferredoxin] + CO2 + H(+). This Pyrococcus abyssi (strain GE5 / Orsay) protein is Ketoisovalerate oxidoreductase subunit VorA (vorA).